Here is a 167-residue protein sequence, read N- to C-terminus: MNIQQGKVWKFGENIDTDLIIAARYLNTSDPQVLASHVMEDARPDFLQHFTKGDFIVAGENFGCGSSREHAPVALKTAGVSAVIAKSFARIFYRNSFNTGLPILEVKETDEIREGDTLEVDMAQGTIKNLTRNQTYAFKPIPPFMMELLESGGLIEHAKAKIAQGVL.

This sequence belongs to the LeuD family. LeuD type 2 subfamily. As to quaternary structure, heterodimer of LeuC and LeuD.

The enzyme catalyses (2R,3S)-3-isopropylmalate = (2S)-2-isopropylmalate. It participates in amino-acid biosynthesis; L-leucine biosynthesis; L-leucine from 3-methyl-2-oxobutanoate: step 2/4. Its function is as follows. Catalyzes the isomerization between 2-isopropylmalate and 3-isopropylmalate, via the formation of 2-isopropylmaleate. This is 3-isopropylmalate dehydratase small subunit from Wolinella succinogenes (strain ATCC 29543 / DSM 1740 / CCUG 13145 / JCM 31913 / LMG 7466 / NCTC 11488 / FDC 602W) (Vibrio succinogenes).